A 363-amino-acid polypeptide reads, in one-letter code: Chorismate synthase (363 aa).

Positions 48 and 54 each coordinate NADP(+). Residues 125-127, 237-238, Gly-277, 292-296, and Arg-318 contribute to the FMN site; these read RSS, NA, and KPTSS.

Belongs to the chorismate synthase family. In terms of assembly, homotetramer. FMNH2 is required as a cofactor.

The enzyme catalyses 5-O-(1-carboxyvinyl)-3-phosphoshikimate = chorismate + phosphate. Its pathway is metabolic intermediate biosynthesis; chorismate biosynthesis; chorismate from D-erythrose 4-phosphate and phosphoenolpyruvate: step 7/7. Its function is as follows. Catalyzes the anti-1,4-elimination of the C-3 phosphate and the C-6 proR hydrogen from 5-enolpyruvylshikimate-3-phosphate (EPSP) to yield chorismate, which is the branch point compound that serves as the starting substrate for the three terminal pathways of aromatic amino acid biosynthesis. This reaction introduces a second double bond into the aromatic ring system. This is Chorismate synthase from Ectopseudomonas mendocina (strain ymp) (Pseudomonas mendocina).